Consider the following 240-residue polypeptide: EF-hand domain-containing protein D1 (240 aa).

The disordered stretch occupies residues 17–54 (EVRAETDQGDPQPAPCDAPAGHPEPEPPARAPTASADS). 2 consecutive EF-hand domains span residues 91–126 (RLLKDLEKMFKTYDAGRDGFIDLMELKLMMEKLGAP) and 127–162 (QTHLGLKSMIKEVDEDFDGKLSFREFLLIFHKAAAG). Ca(2+) contacts are provided by Asp-104, Asp-108, Glu-115, Asp-140, Asp-142, Asp-144, Lys-146, and Glu-151.

As to expression, widely expressed. Highest expression in testis, followed by ovary, kidney, cerebrum, cerebellum, heart, liver, and spleen. In the cerebrum and cerebellum, undetectable at embryonic stages, expression increases after birth up to adult stage. In adult CNS, detected in neurons of the cerebellum, cerebrum and hippocampus formation, including dentate gyrus and Cornu Ammonis, but not in the white matter. In the testis, expressed in spermatocytes, but not in spermatogonia nor in interstitial cells. In ovary, found predominantly in mural granulosa cells and those of the cumulus oophorus. In kidney, expressed in collecting ducts, but not in glomeruli. Not detected in skeletal muscle.

Its subcellular location is the mitochondrion inner membrane. Functionally, acts as a calcium sensor for mitochondrial flash (mitoflash) activation, an event characterized by stochastic bursts of superoxide production. May play a role in neuronal differentiation. This chain is EF-hand domain-containing protein D1 (Efhd1), found in Mus musculus (Mouse).